Here is a 182-residue protein sequence, read N- to C-terminus: R-phycoerythrin subunit beta (182 aa).

Cys82 lines the (2R,3E)-phycoerythrobilin pocket.

The protein belongs to the phycobiliprotein family. As to quaternary structure, homodimer. Contains one covalently linked phycoerythrobilin chromophore.

Green-light absorbing phycoerythrin of unknown function. The chain is R-phycoerythrin subunit beta (cpeB) from Prochlorococcus marinus (strain SARG / CCMP1375 / SS120).